The sequence spans 245 residues: Ribonuclease PH (245 aa).

Residues Arg-93 and 131-133 (GTR) contribute to the phosphate site.

The protein belongs to the RNase PH family. In terms of assembly, homohexameric ring arranged as a trimer of dimers.

The catalysed reaction is tRNA(n+1) + phosphate = tRNA(n) + a ribonucleoside 5'-diphosphate. In terms of biological role, phosphorolytic 3'-5' exoribonuclease that plays an important role in tRNA 3'-end maturation. Removes nucleotide residues following the 3'-CCA terminus of tRNAs; can also add nucleotides to the ends of RNA molecules by using nucleoside diphosphates as substrates, but this may not be physiologically important. Probably plays a role in initiation of 16S rRNA degradation (leading to ribosome degradation) during starvation. This Corynebacterium glutamicum (strain ATCC 13032 / DSM 20300 / JCM 1318 / BCRC 11384 / CCUG 27702 / LMG 3730 / NBRC 12168 / NCIMB 10025 / NRRL B-2784 / 534) protein is Ribonuclease PH.